We begin with the raw amino-acid sequence, 197 residues long: Large ribosomal subunit protein bL25 (197 aa).

Belongs to the bacterial ribosomal protein bL25 family. CTC subfamily. Part of the 50S ribosomal subunit; part of the 5S rRNA/L5/L18/L25 subcomplex. Contacts the 5S rRNA. Binds to the 5S rRNA independently of L5 and L18.

This is one of the proteins that binds to the 5S RNA in the ribosome where it forms part of the central protuberance. In Caulobacter vibrioides (strain ATCC 19089 / CIP 103742 / CB 15) (Caulobacter crescentus), this protein is Large ribosomal subunit protein bL25.